The chain runs to 694 residues: DNA-directed RNA polymerase subunit beta' (694 aa).

The Zn(2+) site is built by Cys-69, Cys-71, Cys-87, and Cys-90. Asp-489, Asp-491, and Asp-493 together coordinate Mg(2+).

Belongs to the RNA polymerase beta' chain family. RpoC1 subfamily. In terms of assembly, in plastids the minimal PEP RNA polymerase catalytic core is composed of four subunits: alpha, beta, beta', and beta''. When a (nuclear-encoded) sigma factor is associated with the core the holoenzyme is formed, which can initiate transcription. Mg(2+) serves as cofactor. The cofactor is Zn(2+).

It is found in the plastid. Its subcellular location is the chloroplast. It catalyses the reaction RNA(n) + a ribonucleoside 5'-triphosphate = RNA(n+1) + diphosphate. In terms of biological role, DNA-dependent RNA polymerase catalyzes the transcription of DNA into RNA using the four ribonucleoside triphosphates as substrates. The sequence is that of DNA-directed RNA polymerase subunit beta' from Adiantum capillus-veneris (Maidenhair fern).